The primary structure comprises 259 residues: Diphthine synthase (259 aa).

S-adenosyl-L-methionine contacts are provided by residues L9, D85, V88, 113–114, L168, A209, and H234; that span reads TA.

It belongs to the diphthine synthase family. In terms of assembly, homodimer.

It catalyses the reaction 2-[(3S)-amino-3-carboxypropyl]-L-histidyl-[translation elongation factor 2] + 3 S-adenosyl-L-methionine = diphthine-[translation elongation factor 2] + 3 S-adenosyl-L-homocysteine + 3 H(+). It functions in the pathway protein modification; peptidyl-diphthamide biosynthesis. In terms of biological role, S-adenosyl-L-methionine-dependent methyltransferase that catalyzes the trimethylation of the amino group of the modified target histidine residue in translation elongation factor 2 (EF-2), to form an intermediate called diphthine. The three successive methylation reactions represent the second step of diphthamide biosynthesis. This is Diphthine synthase from Haloarcula marismortui (strain ATCC 43049 / DSM 3752 / JCM 8966 / VKM B-1809) (Halobacterium marismortui).